Here is a 102-residue protein sequence, read N- to C-terminus: Protamine-2 (102 aa).

Residues Ser8, Ser10, and Ser37 each carry the phosphoserine modification. Residues 16–102 (VYGQQLRGQE…RTRRRRCRRH (87 aa)) form a disordered region. Residues 49–102 (GHSHYRRRHCSRRRLHRIHRQQHRSCGRRRRRSCRQRRRHRRGCRTRRRRCRRH) show a composition bias toward basic residues.

Belongs to the protamine P2 family. In terms of assembly, interacts with TDRP. Proteolytic processing into mature chains is required for histone eviction during spermatogenesis. Transition proteins (TNP1 and TNP2) are required for processing. As to expression, testis.

The protein resides in the nucleus. It is found in the chromosome. Protamines substitute for histones in the chromatin of sperm during the haploid phase of spermatogenesis. They compact sperm DNA into a highly condensed, stable and inactive complex. The protein is Protamine-2 (PRM2) of Hylobates lar (Lar gibbon).